A 463-amino-acid polypeptide reads, in one-letter code: Argininosuccinate lyase (463 aa).

It belongs to the lyase 1 family. Argininosuccinate lyase subfamily.

It is found in the cytoplasm. The enzyme catalyses 2-(N(omega)-L-arginino)succinate = fumarate + L-arginine. It participates in amino-acid biosynthesis; L-arginine biosynthesis; L-arginine from L-ornithine and carbamoyl phosphate: step 3/3. The chain is Argininosuccinate lyase from Dinoroseobacter shibae (strain DSM 16493 / NCIMB 14021 / DFL 12).